The following is a 187-amino-acid chain: Large ribosomal subunit protein uL5 (187 aa).

Belongs to the universal ribosomal protein uL5 family. As to quaternary structure, part of the 50S ribosomal subunit; part of the 5S rRNA/L5/L18/L25 subcomplex. Contacts the 5S rRNA and the P site tRNA. Forms a bridge to the 30S subunit in the 70S ribosome.

Functionally, this is one of the proteins that bind and probably mediate the attachment of the 5S RNA into the large ribosomal subunit, where it forms part of the central protuberance. In the 70S ribosome it contacts protein S13 of the 30S subunit (bridge B1b), connecting the 2 subunits; this bridge is implicated in subunit movement. Contacts the P site tRNA; the 5S rRNA and some of its associated proteins might help stabilize positioning of ribosome-bound tRNAs. This chain is Large ribosomal subunit protein uL5, found in Mycolicibacterium smegmatis (strain ATCC 700084 / mc(2)155) (Mycobacterium smegmatis).